The sequence spans 234 residues: 2,3,4,5-tetrahydropyridine-2,6-dicarboxylate N-acetyltransferase (234 aa).

Belongs to the transferase hexapeptide repeat family. DapH subfamily.

It carries out the reaction (S)-2,3,4,5-tetrahydrodipicolinate + acetyl-CoA + H2O = L-2-acetamido-6-oxoheptanedioate + CoA. The protein operates within amino-acid biosynthesis; L-lysine biosynthesis via DAP pathway; LL-2,6-diaminopimelate from (S)-tetrahydrodipicolinate (acetylase route): step 1/3. Functionally, catalyzes the transfer of an acetyl group from acetyl-CoA to tetrahydrodipicolinate. The protein is 2,3,4,5-tetrahydropyridine-2,6-dicarboxylate N-acetyltransferase of Leuconostoc citreum (strain KM20).